We begin with the raw amino-acid sequence, 198 residues long: tRNA (pseudouridine(54)-N(1))-methyltransferase (198 aa).

Residues Leu-134 and Gly-155 each contribute to the S-adenosyl-L-methionine site.

It belongs to the methyltransferase superfamily. TrmY family. As to quaternary structure, homodimer.

Its subcellular location is the cytoplasm. The enzyme catalyses pseudouridine(54) in tRNA + S-adenosyl-L-methionine = N(1)-methylpseudouridine(54) in tRNA + S-adenosyl-L-homocysteine + H(+). Functionally, specifically catalyzes the N1-methylation of pseudouridine at position 54 (Psi54) in tRNAs. In Thermococcus kodakarensis (strain ATCC BAA-918 / JCM 12380 / KOD1) (Pyrococcus kodakaraensis (strain KOD1)), this protein is tRNA (pseudouridine(54)-N(1))-methyltransferase.